Reading from the N-terminus, the 1143-residue chain is MVQRISLKNKLLPDLVEIQRDSFKWFLLEGLTEVLEFFPNISDPTSRLELQLFGKEYKIKFPRYSVRQAKSRDRTYSAQIYVPAKLTRKDIDLPSKDQNKTIKSLDLSSNHLQFSAEKQIKNKKYKKRLVFIGDLPIMTNRGTFIVSGTERVIINQIIRSPGIYYKQDIDKNGKQIYSASLISNRGSWLKFEIDPKGEIWIRIDKTHKVNAYIFLRAIGLNKNEIQKGLSKYAFLISASQSYSVKELAKEIGKNDIEEVTDEEALLIVYSKLRPNEPATVPVAKQMLYSRFFDPKRYDLGEVGRYKINKKLGLNIPKTFRVLSPQDILSSIDYLINIKDKNSGNLDDIDHLGNRRVRSVGELLQNQFRVGLNRLERIIRERMMICDIDSLSLSNLINPKPLIASVREFFGSSQLSQFMDQTNPVAELTHKRRISALGPGGFNKDRAGFAVRDLHPSHYGRICPIETPEGPNAGLIGSLATCARVNIFGFIETPFYPVHNGQVDYSNNPIYLTADEEDDFRVAPGDVKVNVQNYIEGDIIPVRYRQEFVTTIPNQVDYIAISPIQVISAATSLIPFLEHDDANRALMGSNMQRQAVPLLYPEKPIIGTGLETKIARDSGMVVISRTSGCVNYVSANKIGIQDNNGRTVLYRLKKYYRSNQDTCINQRPIVWVGEKIVVGQTLADGASTDCGEIALGRNILVAYMPWEGYNYEDAFLISERLVYEDVYTSIHIEKYEVECRQTKLGPEEITREIPNVSDHSLKDLDRNGIVVCGSWVEAGDILVGKITPKGEADQLPEGKLLRAIFGEKARDVRDTSLRLPNAAKGRVVNVRVFTRQKGDELPPGTNAMIRVYVAQKRKIQVGDKMAGRHGNKGIISRILPKQDMPYLCDGTPVDIVLNPLGVPSRMNVGQVFECLLGLAGGYLDKRFKIIPFDEMYGAEASRALVNRKLQEASILTKNKWIFNDQHPGKMQVFDGRTGEPFDNPVTIGRAYMLKLVHLVDDKIHARSTGPYSLVTQQPLGGRAQHGGQRLGEMEVWALEAFGAAYTLQELLTVKSDDMQARNEALNAIVKGKPIPKPGTPESFKVLMRELQSLGLDIAVHKLKLFENGQRRTVEVDLMSDSKEDRVARSNYEVLPVDDFEQFLY.

Belongs to the RNA polymerase beta chain family. In plastids the minimal PEP RNA polymerase catalytic core is composed of four subunits: alpha, beta, beta', and beta''. When a (nuclear-encoded) sigma factor is associated with the core the holoenzyme is formed, which can initiate transcription.

The protein localises to the plastid. It localises to the chloroplast. It catalyses the reaction RNA(n) + a ribonucleoside 5'-triphosphate = RNA(n+1) + diphosphate. Functionally, DNA-dependent RNA polymerase catalyzes the transcription of DNA into RNA using the four ribonucleoside triphosphates as substrates. The protein is DNA-directed RNA polymerase subunit beta of Porphyra purpurea (Red seaweed).